The primary structure comprises 159 residues: Ribosomal RNA large subunit methyltransferase H (159 aa).

Residues L76, G108, and F127 to L132 each bind S-adenosyl-L-methionine.

The protein belongs to the RNA methyltransferase RlmH family. Homodimer.

The protein localises to the cytoplasm. It catalyses the reaction pseudouridine(1915) in 23S rRNA + S-adenosyl-L-methionine = N(3)-methylpseudouridine(1915) in 23S rRNA + S-adenosyl-L-homocysteine + H(+). Functionally, specifically methylates the pseudouridine at position 1915 (m3Psi1915) in 23S rRNA. The polypeptide is Ribosomal RNA large subunit methyltransferase H (Streptococcus pyogenes serotype M12 (strain MGAS2096)).